Consider the following 363-residue polypeptide: NAD(P)H-quinone oxidoreductase subunit 1, chloroplastic (363 aa).

A run of 7 helical transmembrane segments spans residues W28–V48, F98–F118, I129–G149, F253–V273, L274–I294, I300–I320, and L336–T356.

Belongs to the complex I subunit 1 family. As to quaternary structure, NDH is composed of at least 16 different subunits, 5 of which are encoded in the nucleus.

It localises to the plastid. Its subcellular location is the chloroplast thylakoid membrane. The enzyme catalyses a plastoquinone + NADH + (n+1) H(+)(in) = a plastoquinol + NAD(+) + n H(+)(out). It catalyses the reaction a plastoquinone + NADPH + (n+1) H(+)(in) = a plastoquinol + NADP(+) + n H(+)(out). NDH shuttles electrons from NAD(P)H:plastoquinone, via FMN and iron-sulfur (Fe-S) centers, to quinones in the photosynthetic chain and possibly in a chloroplast respiratory chain. The immediate electron acceptor for the enzyme in this species is believed to be plastoquinone. Couples the redox reaction to proton translocation, and thus conserves the redox energy in a proton gradient. The polypeptide is NAD(P)H-quinone oxidoreductase subunit 1, chloroplastic (Citrus sinensis (Sweet orange)).